We begin with the raw amino-acid sequence, 449 residues long: Anther-specific proline-rich protein APG (449 aa).

Over residues 1 to 118 (PPKPQPKPPP…KPPAPSPPKP (118 aa)) the composition is skewed to pro residues. The tract at residues 1-123 (PPKPQPKPPP…SPPKPQNKTI (123 aa)) is disordered. Serine 132 acts as the Nucleophile in catalysis. Catalysis depends on residues aspartate 425 and histidine 428.

This sequence belongs to the 'GDSL' lipolytic enzyme family. As to expression, found in anther, only in male fertile plants.

In Brassica napus (Rape), this protein is Anther-specific proline-rich protein APG (APG).